The chain runs to 628 residues: Carbon monoxide dehydrogenase 1 (628 aa).

[4Fe-4S] cluster is bound by residues cysteine 44, cysteine 52, cysteine 53, cysteine 56, cysteine 61, and cysteine 75. Histidine 266, cysteine 302, cysteine 340, cysteine 448, cysteine 478, and cysteine 519 together coordinate [Ni-4Fe-5S] cluster.

It belongs to the Ni-containing carbon monoxide dehydrogenase family. Homodimer. The cofactor is [4Fe-4S] cluster. [Ni-4Fe-5S] cluster serves as cofactor.

The enzyme catalyses CO + 2 oxidized [2Fe-2S]-[ferredoxin] + H2O = 2 reduced [2Fe-2S]-[ferredoxin] + CO2 + 2 H(+). Its function is as follows. CODH oxidizes carbon monoxide coupled, via CooF, to the reduction of a hydrogen cation by a hydrogenase (possibly CooH). This Methanosarcina acetivorans (strain ATCC 35395 / DSM 2834 / JCM 12185 / C2A) protein is Carbon monoxide dehydrogenase 1 (cooS1).